We begin with the raw amino-acid sequence, 309 residues long: Pantothenate kinase (309 aa).

Residue Gly-92 to Thr-99 coordinates ATP.

Belongs to the prokaryotic pantothenate kinase family.

The protein resides in the cytoplasm. The catalysed reaction is (R)-pantothenate + ATP = (R)-4'-phosphopantothenate + ADP + H(+). It functions in the pathway cofactor biosynthesis; coenzyme A biosynthesis; CoA from (R)-pantothenate: step 1/5. The sequence is that of Pantothenate kinase (coaA) from Lactiplantibacillus plantarum (strain ATCC BAA-793 / NCIMB 8826 / WCFS1) (Lactobacillus plantarum).